The primary structure comprises 532 residues: Glutamate--cysteine ligase (532 aa).

Belongs to the glutamate--cysteine ligase type 1 family. Type 1 subfamily.

It catalyses the reaction L-cysteine + L-glutamate + ATP = gamma-L-glutamyl-L-cysteine + ADP + phosphate + H(+). It participates in sulfur metabolism; glutathione biosynthesis; glutathione from L-cysteine and L-glutamate: step 1/2. This is Glutamate--cysteine ligase from Pseudomonas fluorescens (strain Pf0-1).